The following is a 156-amino-acid chain: Small ribosomal subunit protein uS7 (156 aa).

It belongs to the universal ribosomal protein uS7 family. As to quaternary structure, part of the 30S ribosomal subunit. Contacts proteins S9 and S11.

In terms of biological role, one of the primary rRNA binding proteins, it binds directly to 16S rRNA where it nucleates assembly of the head domain of the 30S subunit. Is located at the subunit interface close to the decoding center, probably blocks exit of the E-site tRNA. The polypeptide is Small ribosomal subunit protein uS7 (Buchnera aphidicola subsp. Cinara cedri (strain Cc)).